A 124-amino-acid polypeptide reads, in one-letter code: Small ribosomal subunit protein uS13 (124 aa).

The interval 94–124 (RGMPVRGQRTKTNARTRKGPKRTIAGKKKAR) is disordered.

This sequence belongs to the universal ribosomal protein uS13 family. In terms of assembly, part of the 30S ribosomal subunit. Forms a loose heterodimer with protein S19. Forms two bridges to the 50S subunit in the 70S ribosome.

Functionally, located at the top of the head of the 30S subunit, it contacts several helices of the 16S rRNA. In the 70S ribosome it contacts the 23S rRNA (bridge B1a) and protein L5 of the 50S subunit (bridge B1b), connecting the 2 subunits; these bridges are implicated in subunit movement. Contacts the tRNAs in the A and P-sites. In Mycobacterium tuberculosis (strain ATCC 25177 / H37Ra), this protein is Small ribosomal subunit protein uS13.